Here is a 381-residue protein sequence, read N- to C-terminus: Cell division protein FtsZ (381 aa).

Positions 1–25 are disordered; the sequence is MKFINDAIKESEKREKPSSSSMNSE. Positions 7 to 17 are enriched in basic and acidic residues; sequence AIKESEKREKP. GTP is bound by residues 48–52, 135–137, Glu-166, Arg-170, and Asp-213; these read GAGNN and GTG.

The protein belongs to the FtsZ family. As to quaternary structure, homodimer. Polymerizes to form a dynamic ring structure in a strictly GTP-dependent manner. Interacts directly with several other division proteins.

It is found in the cytoplasm. Essential cell division protein that forms a contractile ring structure (Z ring) at the future cell division site. The regulation of the ring assembly controls the timing and the location of cell division. One of the functions of the FtsZ ring is to recruit other cell division proteins to the septum to produce a new cell wall between the dividing cells. Binds GTP and shows GTPase activity. The polypeptide is Cell division protein FtsZ (Methanothermobacter thermautotrophicus (strain ATCC 29096 / DSM 1053 / JCM 10044 / NBRC 100330 / Delta H) (Methanobacterium thermoautotrophicum)).